The sequence spans 257 residues: DNA-binding and peroxide stress resistance protein YaaA (257 aa).

The short motif at 35 to 66 is the Helix-hairpin-helix element; it reads IGIARKLSAPQIGKLMSISDKLADLNATRFHD.

It belongs to the UPF0246 family.

The protein resides in the cytoplasm. Protects bacteria from neutrophil-related defense upon infection of mammals. Binds DNA. This Klebsiella pneumoniae subsp. pneumoniae (strain HS11286) protein is DNA-binding and peroxide stress resistance protein YaaA.